Reading from the N-terminus, the 389-residue chain is Large envelope protein (389 aa).

Met-1 is subject to N-acetylmethionine. Gly-2 is lipidated: N-myristoyl glycine; by host. The segment at 2 to 108 (GTNLSVPNPL…PPLRDSHPQA (107 aa)) is pre-S1. Residues 2–163 (GTNLSVPNPL…FSRTGDPAPN (162 aa)) form a pre-S region. Residues 2 to 170 (GTNLSVPNPL…APNMESTTSG (169 aa)) lie on the Virion surface; in external conformation side of the membrane. At 2-242 (GTNLSVPNPL…PGYRWMCLRR (241 aa)) the chain is on the intravirion; in internal conformation side. The tract at residues 74-105 (LTTVPAAPPPASTNRQSGRQPTPISPPLRDSH) is disordered. The segment covering 85-95 (STNRQSGRQPT) has biased composition (polar residues). The segment at 109 to 163 (MQWNSTTFHQALLDPRVRGLYFPAGGSSSGTVNPVPTIVSPISSIFSRTGDPAPN) is pre-S2. Residues 171–191 (FLGPLLVLQAGFFLLTRILTI) form a helical membrane-spanning segment. Residues 192–242 (PQSLDSWWTSLNFLGEAPTCPGQNSQSPTSNHSPTSCPPICPGYRWMCLRR) lie on the Intravirion; in external conformation side of the membrane. Residues 243-263 (FIIFLFILLLCLIFLLVLLDY) traverse the membrane as a helical segment. Residues 264-337 (QGMLPVCPLL…WASVRFSWLS (74 aa)) lie on the Virion surface side of the membrane. Asn-309 carries an N-linked (GlcNAc...) asparagine; by host glycan. A helical transmembrane segment spans residues 338–358 (LLVPFVQWFAGLSPTVWLSVI). The Intravirion portion of the chain corresponds to 359–364 (WMMWYW). The helical transmembrane segment at 365–387 (GPSLYNILSPFLPLLPIFFCLWV) threads the bilayer. Residues 388 to 389 (YI) lie on the Virion surface side of the membrane.

Belongs to the orthohepadnavirus major surface antigen family. In terms of assembly, in its internal form (Li-HBsAg), interacts with the capsid protein and with the isoform S. Interacts with host chaperone CANX. Associates with host chaperone CANX through its pre-S2 N glycan; this association may be essential for isoform M proper secretion. As to quaternary structure, interacts with isoform L. Interacts with the antigens of satellite virus HDV (HDVAgs); this interaction is required for encapsidation of HDV genomic RNA. In terms of processing, isoform M is N-terminally acetylated by host at a ratio of 90%, and N-glycosylated by host at the pre-S2 region. Post-translationally, myristoylated.

Its subcellular location is the virion membrane. The large envelope protein exists in two topological conformations, one which is termed 'external' or Le-HBsAg and the other 'internal' or Li-HBsAg. In its external conformation the protein attaches the virus to cell receptors and thereby initiating infection. This interaction determines the species specificity and liver tropism. This attachment induces virion internalization predominantly through caveolin-mediated endocytosis. The large envelope protein also assures fusion between virion membrane and endosomal membrane. In its internal conformation the protein plays a role in virion morphogenesis and mediates the contact with the nucleocapsid like a matrix protein. In terms of biological role, the middle envelope protein plays an important role in the budding of the virion. It is involved in the induction of budding in a nucleocapsid independent way. In this process the majority of envelope proteins bud to form subviral lipoprotein particles of 22 nm of diameter that do not contain a nucleocapsid. This is Large envelope protein from Hepatitis B virus genotype C subtype adr (isolate Japan/A4/1994) (HBV-C).